The chain runs to 742 residues: NAD(P)H-quinone oxidoreductase subunit 5, chloroplastic (742 aa).

16 helical membrane-spanning segments follow: residues 9 to 29 (WIIP…LLFF), 39 to 59 (IWAF…MKLA), 91 to 111 (PLTS…LIYS), 125 to 145 (FAYM…SNLI), 147 to 167 (IYIF…FWFT), 185 to 205 (GDFG…SFEF), 224 to 244 (LFCI…SAQF), 258 to 278 (TPIS…FLVA), 280 to 300 (LLPL…IGII), 327 to 347 (LGYM…FHLI), 354 to 374 (ALLF…VGYS), 396 to 416 (TSFL…CFWS), 425 to 445 (WVYS…TAFY), 549 to 569 (LFPL…GIPF), 603 to 623 (FVIN…IAFF), and 721 to 741 (ISSY…IFTF).

The protein belongs to the complex I subunit 5 family. NDH is composed of at least 16 different subunits, 5 of which are encoded in the nucleus.

The protein localises to the plastid. It localises to the chloroplast thylakoid membrane. It carries out the reaction a plastoquinone + NADH + (n+1) H(+)(in) = a plastoquinol + NAD(+) + n H(+)(out). The enzyme catalyses a plastoquinone + NADPH + (n+1) H(+)(in) = a plastoquinol + NADP(+) + n H(+)(out). Its function is as follows. NDH shuttles electrons from NAD(P)H:plastoquinone, via FMN and iron-sulfur (Fe-S) centers, to quinones in the photosynthetic chain and possibly in a chloroplast respiratory chain. The immediate electron acceptor for the enzyme in this species is believed to be plastoquinone. Couples the redox reaction to proton translocation, and thus conserves the redox energy in a proton gradient. The polypeptide is NAD(P)H-quinone oxidoreductase subunit 5, chloroplastic (ndhF) (Spinacia oleracea (Spinach)).